An 87-amino-acid polypeptide reads, in one-letter code: Large ribosomal subunit protein eL31 (87 aa).

It belongs to the eukaryotic ribosomal protein eL31 family.

The sequence is that of Large ribosomal subunit protein eL31 from Methanoculleus marisnigri (strain ATCC 35101 / DSM 1498 / JR1).